The primary structure comprises 264 residues: Apolipoprotein A-I (264 aa).

An N-terminal signal peptide occupies residues 1–18; that stretch reads MKAVVLALAVLFLTGSQA. Tandem repeats lie at residues 67 to 88 and 89 to 110. A 10 X approximate tandem repeats region spans residues 67-264; it reads LHLLDNWDTL…DEASKKLNAQ (198 aa). Residue Met-109 is modified to Methionine sulfoxide. One copy of the 3; half-length repeat lies at 111–121; it reads KDLEEVKVKVQ. 5 repeat units span residues 122–143, 144–165, 166–187, 188–207, and 208–229. The stretch at 230 to 240 is one 9; half-length repeat; that stretch reads PALEDLRQGLM. Repeat 10 spans residues 241-264; it reads PVLENLKTTVLAAIDEASKKLNAQ.

It belongs to the apolipoprotein A1/A4/E family. In terms of assembly, homodimer. Interacts with APOA1BP and CLU. Component of a sperm activating protein complex (SPAP), consisting of APOA1, an immunoglobulin heavy chain, an immunoglobulin light chain and albumin. Interacts with NDRG1. Interacts with SCGB3A2. Interacts with NAXE and YJEFN3. In terms of processing, glycosylated. Post-translationally, palmitoylated. Phosphorylation sites are present in the extracellular medium.

It localises to the secreted. Participates in the reverse transport of cholesterol from tissues to the liver for excretion by promoting cholesterol efflux from tissues and by acting as a cofactor for the lecithin cholesterol acyltransferase (LCAT). As part of the SPAP complex, activates spermatozoa motility. In Jaculus jaculus (Lesser Egyptian jerboa), this protein is Apolipoprotein A-I (APOA1).